Consider the following 208-residue polypeptide: FMN-dependent NADH:quinone oxidoreductase (208 aa).

FMN-binding positions include Ser10, 16–18 (SRS), and 96–99 (MYNF).

The protein belongs to the azoreductase type 1 family. As to quaternary structure, homodimer. Requires FMN as cofactor.

The catalysed reaction is 2 a quinone + NADH + H(+) = 2 a 1,4-benzosemiquinone + NAD(+). It catalyses the reaction N,N-dimethyl-1,4-phenylenediamine + anthranilate + 2 NAD(+) = 2-(4-dimethylaminophenyl)diazenylbenzoate + 2 NADH + 2 H(+). Quinone reductase that provides resistance to thiol-specific stress caused by electrophilic quinones. Its function is as follows. Also exhibits azoreductase activity. Catalyzes the reductive cleavage of the azo bond in aromatic azo compounds to the corresponding amines. This Xanthobacter autotrophicus (strain ATCC BAA-1158 / Py2) protein is FMN-dependent NADH:quinone oxidoreductase.